A 417-amino-acid polypeptide reads, in one-letter code: MFANISLSEFDPELAKSIEAEDARQEAHIELIASENYCSPAVMEAQGSKLTNKYAEGYPGKRYYGGCEYVDVIEQLAIDRAKALFGADYANVQPHAGSQANSAVYLALLNAGDTVLGMSLAHGGHLTHGAKVNFSGKTYNAVQYGLNPETGEIDYDEVERLAIEHKPRMIVAGFSAYSRIVDWQRFRDIADKVGAYLFVDMAHVAGLVAAGVYPSPVQIADVTTTTTHKTLRGPRSGLILAKANEEIEKKLQSAVFPGNQGGPLVHAIAAKAVCFKEAMAPEYKAYQQQVVKNAQAMAEVLIARGYDIVSGGTDNHLFLLSLIKQDVTGKEADAWLGNANITVNKNAVPNDPRSPFVTSGIRIGTPAVTTRGFGEAEVRDLASWIADVLDSKGDEKVIADVKAKVEAVCAKFPVYEN.

(6S)-5,6,7,8-tetrahydrofolate is bound by residues leucine 120 and glycine 124–leucine 126. Lysine 229 is subject to N6-(pyridoxal phosphate)lysine. A (6S)-5,6,7,8-tetrahydrofolate-binding site is contributed by serine 354 to phenylalanine 356.

This sequence belongs to the SHMT family. As to quaternary structure, homodimer. Requires pyridoxal 5'-phosphate as cofactor.

Its subcellular location is the cytoplasm. The catalysed reaction is (6R)-5,10-methylene-5,6,7,8-tetrahydrofolate + glycine + H2O = (6S)-5,6,7,8-tetrahydrofolate + L-serine. Its pathway is one-carbon metabolism; tetrahydrofolate interconversion. The protein operates within amino-acid biosynthesis; glycine biosynthesis; glycine from L-serine: step 1/1. Catalyzes the reversible interconversion of serine and glycine with tetrahydrofolate (THF) serving as the one-carbon carrier. This reaction serves as the major source of one-carbon groups required for the biosynthesis of purines, thymidylate, methionine, and other important biomolecules. Also exhibits THF-independent aldolase activity toward beta-hydroxyamino acids, producing glycine and aldehydes, via a retro-aldol mechanism. This is Serine hydroxymethyltransferase from Acinetobacter baylyi (strain ATCC 33305 / BD413 / ADP1).